Here is a 459-residue protein sequence, read N- to C-terminus: E3 ubiquitin-protein ligase RNF14 (459 aa).

Residues 10-129 (DELLALASIY…QFLKEETLDF (120 aa)) form the RWD domain. The segment at 141–169 (SGSQPQCEPAQKHAADASGEKSKVQDLDP) is disordered. Over residues 150–169 (AQKHAADASGEKSKVQDLDP) the composition is skewed to basic and acidic residues. Positions 200 to 441 (KAFCCGICYS…NPDSPCYNQL (242 aa)) are TRIAD supradomain. Residues cysteine 204, cysteine 207, cysteine 222, histidine 224, cysteine 227, cysteine 230, cysteine 249, cysteine 254, cysteine 293, cysteine 298, cysteine 313, cysteine 316, cysteine 321, cysteine 324, histidine 329, cysteine 334, cysteine 388, and cysteine 391 each coordinate Zn(2+). RING-type zinc fingers lie at residues 204–249 (CGIC…CLNC) and 204–254 (CGIC…EPKC). Residues 273-334 (ARYDRLLLQS…RRSYHGLSHC (62 aa)) form an IBR-type zinc finger. The RING-type 2; atypical zinc-finger motif lies at 388–417 (CPCCGTNIQKAHGCNKMTCSSCQKYFCWIC). Residue cysteine 401 is part of the active site. Cysteine 406, cysteine 409, cysteine 414, cysteine 417, histidine 429, and cysteine 437 together coordinate Zn(2+).

Belongs to the RBR family. RNF14 subfamily.

The protein localises to the cytoplasm. Its subcellular location is the nucleus. The enzyme catalyses [E2 ubiquitin-conjugating enzyme]-S-ubiquitinyl-L-cysteine + [acceptor protein]-L-lysine = [E2 ubiquitin-conjugating enzyme]-L-cysteine + [acceptor protein]-N(6)-ubiquitinyl-L-lysine.. It participates in protein modification; protein ubiquitination. E3 ubiquitin-protein ligase that plays a key role in the RNF14-RNF25 translation quality control pathway, a pathway that takes place when a ribosome has stalled during translation, and which promotes ubiquitination and degradation of translation factors on stalled ribosomes. Recruited to stalled ribosomes by the ribosome collision sensor GCN1 and mediates 'Lys-6'-linked ubiquitination of target proteins, leading to their degradation. Mediates ubiquitination of eef1a1/eEF1A and etf1/eRF1 translation factors on stalled ribosomes, leading to their degradation. Specifically required to resolve RNA-protein cross-links caused by reactive aldehydes, which trigger translation stress by stalling ribosomes: acts by catalying 'Lys-6'-linked ubiquitination of RNA-protein cross-links, leading to their removal by the ATP-dependent unfoldase VCP and subsequent degradation by the proteasome. Independently of its function in the response to stalled ribosomes, acts as a regulator of transcription in Wnt signaling via its interaction with TCF transcription factors (tcf7/tcf1, tcf7l1/tcf3 and tcf7l2/tcf4). The protein is E3 ubiquitin-protein ligase RNF14 of Danio rerio (Zebrafish).